A 172-amino-acid polypeptide reads, in one-letter code: NADH dehydrogenase [ubiquinone] 1 alpha subcomplex subunit 8 (172 aa).

CHCH domains lie at 33–74 and 75–118; these read GAQC…FRQI and KRHC…LGWV. Short sequence motifs (cx9C motif) lie at residues 36–46, 56–66, 78–88, and 100–110; these read CDKPNKEFMLC, CLEEGKLVNQC, CAEPFTEYWTC, and CRKQQAQFDEC. Intrachain disulfides connect Cys-36–Cys-66, Cys-46–Cys-56, Cys-78–Cys-110, and Cys-88–Cys-100. A disordered region spans residues 133–159; sequence TDRPLPENPYHSRARPEPNPEVEGDLK. Residues 146–159 are compositionally biased toward basic and acidic residues; sequence ARPEPNPEVEGDLK.

This sequence belongs to the complex I NDUFA8 subunit family. Complex I is composed of 45 different subunits.

Its subcellular location is the mitochondrion inner membrane. The protein localises to the mitochondrion intermembrane space. The protein resides in the mitochondrion. Accessory subunit of the mitochondrial membrane respiratory chain NADH dehydrogenase (Complex I), that is believed not to be involved in catalysis. Complex I functions in the transfer of electrons from NADH to the respiratory chain. The immediate electron acceptor for the enzyme is believed to be ubiquinone. The polypeptide is NADH dehydrogenase [ubiquinone] 1 alpha subcomplex subunit 8 (NDUFA8) (Bos taurus (Bovine)).